The sequence spans 1163 residues: Ankyrin repeat-containing protein F37A4.4 (1163 aa).

The stretch at 856 to 885 (YGNTALHVATRRGYQNLVEILIKHGADRSF) is one ANK repeat. The 97-residue stretch at 929 to 1025 (LCVPEKFPVS…KLIEKDCDYL (97 aa)) folds into the BRCT domain.

The sequence is that of Ankyrin repeat-containing protein F37A4.4 from Caenorhabditis elegans.